We begin with the raw amino-acid sequence, 206 residues long: Thymidylate kinase (206 aa).

Residue 11–18 (GIDGAGKT) coordinates ATP.

It belongs to the thymidylate kinase family.

The catalysed reaction is dTMP + ATP = dTDP + ADP. In terms of biological role, phosphorylation of dTMP to form dTDP in both de novo and salvage pathways of dTTP synthesis. In Burkholderia ambifaria (strain MC40-6), this protein is Thymidylate kinase.